A 550-amino-acid polypeptide reads, in one-letter code: uncharacterized protein (550 aa).

The first 13 residues, 1-13 (MAGALFEPSFAAA), serve as a signal peptide directing secretion. Residues 312–358 (DAQPDPHLSGDEPPSRPLTPETTLFEALTPDPEPDPPATHAPAELIT) form a disordered region.

It to M.tuberculosis Rv3776.

This is an uncharacterized protein from Mycobacterium tuberculosis (strain CDC 1551 / Oshkosh).